The primary structure comprises 558 residues: uncharacterized protein (558 aa).

The next 6 helical transmembrane spans lie at 63-83 (LTGI…PSIY), 90-110 (VTFG…TYWI), 143-163 (VAAV…TLYG), 168-188 (VFVT…ATNC), 226-246 (SLGS…VLLV), and 258-278 (VLIL…ILAW). The region spanning 279–330 (LTAAPVRVVRAALKRVEQGDLRGDLVVFDGTELGELQRGFNAMVNGLRERER) is the HAMP domain. The Guanylate cyclase domain maps to 362 to 486 (AVVFVDIVGS…KPVNQAARLC (125 aa)). The tract at residues 529-558 (TQLASPHRRPPGSIHLTAEHAEEIRTDRLG) is disordered. A compositionally biased stretch (basic and acidic residues) spans 545–558 (TAEHAEEIRTDRLG).

It belongs to the adenylyl cyclase class-3 family.

It localises to the cell membrane. This is an uncharacterized protein from Mycobacterium tuberculosis (strain CDC 1551 / Oshkosh).